The chain runs to 205 residues: Ribosomal RNA small subunit methyltransferase G (205 aa).

Residues glycine 66, phenylalanine 71, 119–120 (IE), and arginine 135 each bind S-adenosyl-L-methionine.

This sequence belongs to the methyltransferase superfamily. RNA methyltransferase RsmG family.

It localises to the cytoplasm. The enzyme catalyses guanosine(527) in 16S rRNA + S-adenosyl-L-methionine = N(7)-methylguanosine(527) in 16S rRNA + S-adenosyl-L-homocysteine. Specifically methylates the N7 position of guanine in position 527 of 16S rRNA. This Rhizobium rhizogenes (strain K84 / ATCC BAA-868) (Agrobacterium radiobacter) protein is Ribosomal RNA small subunit methyltransferase G.